Consider the following 72-residue polypeptide: Lantibiotic Flvbeta.g (72 aa).

Positions 1-34 (MNNNNFDMEKFKKLAAIVSEGEIDEMLDETTVGA) are cleaved as a propeptide — cleaved by FlvT. The lanthionine (Ser-Cys); by FlvM2 cross-link spans 36–40 (STLPC). 3 positions are modified to 2,3-didehydrobutyrine; by FlvM2: threonine 37, threonine 46, and threonine 48. 3 cross-links (beta-methyllanthionine (Thr-Cys); by FlvM2) span residues 55-61 (TTGFDWC), 63-66 (TGAC), and 67-70 (THSC).

Contains LL-lanthionine and DL-beta-methyllanthionine, when coepressed in E.coli with the flavecin synthetase FlvM2.

It is found in the secreted. Functionally, lanthionine-containing peptide antibiotic (lantibiotic) that is probably weakly active on Gram-positive bacteria, since its analog [Del1]Flvbeta.g shows weak antibacterial activity against M.luteus. This activity is synergistically enhanced by [Del2]Flvalpha.a, an analog of Flvalpha.a, which is encoded by the same operon than Flvbeta.g. The bactericidal activity of lantibiotics is based on depolarization of energized bacterial cytoplasmic membranes, initiated by the formation of aqueous transmembrane pores. The polypeptide is Lantibiotic Flvbeta.g (Ruminococcus flavefaciens).